A 280-amino-acid polypeptide reads, in one-letter code: MRDIVFIERDPYAPIRHCYTVSKILYQGKSPYQEIQVIESPEFGRMLILDGVVQLDEKYEFLYHEYLAHVPLHAHPNPRNVLIIGGGDGGTLREVLKHDIVERAVLVDIDKEVIEVSKKYLPTLSVGFQDPRAIVVNEDGYKYVQDYENEFDVIIVDSTDPVGFAHVLTTEDFFRHVYKALKEDGIFVAQTESIHYHLEMVSNIQQRLKKVFPIVDLYTSVIPIYAGYWWTFSIASKKYPVRTPAREVKVQTKIYDADMHEYAFLPESFYNKIVNGEYKY.

The 235-residue stretch at 3–237 (DIVFIERDPY…YWWTFSIASK (235 aa)) folds into the PABS domain. Residue Gln33 participates in S-methyl-5'-thioadenosine binding. Spermidine contacts are provided by His64 and Asp88. Residues Asp108 and 139–140 (DG) contribute to the S-methyl-5'-thioadenosine site. Asp157 functions as the Proton acceptor in the catalytic mechanism. 157–160 (DSTD) lines the spermidine pocket.

The protein belongs to the spermidine/spermine synthase family. As to quaternary structure, homodimer or homotetramer.

Its subcellular location is the cytoplasm. The enzyme catalyses S-adenosyl 3-(methylsulfanyl)propylamine + putrescine = S-methyl-5'-thioadenosine + spermidine + H(+). It functions in the pathway amine and polyamine biosynthesis; spermidine biosynthesis; spermidine from putrescine: step 1/1. Catalyzes the irreversible transfer of a propylamine group from the amino donor S-adenosylmethioninamine (decarboxy-AdoMet) to putrescine (1,4-diaminobutane) to yield spermidine. This Aquifex aeolicus (strain VF5) protein is Polyamine aminopropyltransferase 1.